Consider the following 101-residue polypeptide: Urease subunit beta (101 aa).

Belongs to the urease beta subunit family. In terms of assembly, heterotrimer of UreA (gamma), UreB (beta) and UreC (alpha) subunits. Three heterotrimers associate to form the active enzyme.

It localises to the cytoplasm. It catalyses the reaction urea + 2 H2O + H(+) = hydrogencarbonate + 2 NH4(+). The protein operates within nitrogen metabolism; urea degradation; CO(2) and NH(3) from urea (urease route): step 1/1. This chain is Urease subunit beta, found in Pseudomonas fluorescens (strain ATCC BAA-477 / NRRL B-23932 / Pf-5).